An 81-amino-acid polypeptide reads, in one-letter code: Large ribosomal subunit protein bL27 (81 aa).

Polar residues predominate over residues 1–11 (MATSKSGGSSK). Residues 1 to 24 (MATSKSGGSSKNGRDSISKRLGVK) are disordered.

The protein belongs to the bacterial ribosomal protein bL27 family.

The sequence is that of Large ribosomal subunit protein bL27 from Borrelia duttonii (strain Ly).